Reading from the N-terminus, the 953-residue chain is MTPIAITPVAPVDIIYDLKHTERATESSPVTLLDVFSRAVSQYPDHELSFITSSAHDSTVHTKTFAEFNQHVHALAQAMRAWGKPTGSVIVVYLTEHEDNMAAVWASLLAGYVPCLQPALSAQQAHKEGHVGHIKNLFSSATWLTNESGAEQVQSISGLDIHLLSELKASAEAGVDFQAHQPNPDDEAILFLTSGSTGFSKAVVHTHRTILAACHAKGESYGLTSESKIMNWVGFDHVAGSLEMHIAPLLYGASQLHVHASAILSDPLRFLHLIEEKSIQLAFAPNFLLAKLTRDLEKRSDLFGKFDLSSIKRINSGGEAVVSSTAQAFARTLQNLAKDGDASFVISAGFGMTETCAGCIYDPINVLETPPSYEFLELGTPVAGCEMRIVNPEDGVTPRPDGESGELQVRGPMVFVRYYNNPEATSSSFVEGGWYRTGDVGIVEQGKMRLSGRIKDTVIVHGVSYGIPELETYLQTVEGVTHSFLAAAPYRAPGQETEGFVVFYSPTFDLDSEDAPAKLFATHRALRDVSVKLITLPPQQIIPIPINQMEKTTLGKLSRARLVNLLKQGELAKHIDRAEELVSIARGASFVAPSTETEKTLAGIYAGIFNLSVSDMSASENFFELGGTSIDVIRLKREGESAFDLPEIPTIQILKHPVISSLAKYVDSLISKDASQEEYDPIVPLQLTGNKTPIFMVHPGVGEVLIFVNLAKYFQNERPFYALRARGFEPGHPFFTTMDEMVSCYAAAVKRTQPHGPYAIAGYSYGGVVAFEVAKRLEAMGDEVKFTGLINIPPNIADRMHEIDWTGGMLNLSYFLGLVSKQDANDLAPSMRPLTRKEQLEIVWKLSPPERLVELQLTPEKLDHWVDIAGSLIECGKTYEPGSSVSVLDVFYAIPLRGSKEDWLNKQLKPWAGYSRAEPSYTDVPGQHYTLMDFDHVPGFQKIFRSRLEARGL.

The segment at 37-460 (SRAVSQYPDH…SGRIKDTVIV (424 aa)) is adenylation (A) domain. Residues 592 to 670 (APSTETEKTL…SLAKYVDSLI (79 aa)) enclose the Carrier domain. Residues 597–667 (TEKTLAGIYA…VISSLAKYVD (71 aa)) are thiolation and peptide carrier (T) domain. O-(pantetheine 4'-phosphoryl)serine is present on Ser-629. The segment at 693-795 (PIFMVHPGVG…FTGLINIPPN (103 aa)) is thioesterase (TE) domain.

Belongs to the ATP-dependent AMP-binding enzyme family.

Its pathway is secondary metabolite biosynthesis. An L-tyrosine:2-oxoglutarate aminotransferase (probably invD) and atromentin synthetase invA5 catalyze consecutive steps to turn over L-tyrosine into atromentin, which represents the generic precursor molecule for the entire terphenylquinone and pulvinic acid family of pigments, which are widely distributed secondary metabolites in homobasidiomycetes. The first step catalyzed by the aminotransferase converts L-tyrosine in to 4-hydroxyphenylpyruvate (4-HPP). Adenylation of two 4-HPP monomers by the invA5 adenylation (A) domain, covalent tethering of the monomers as a thioester and oxoester onto the invA5 thiolation (T) and thioesterase (TE) domains, respectively, and symmetric C-C-bond formation between two monomers catalyzed by the invA5 TE domain leads to atromentin. The sequence is that of Atromentin synthetase invA5 (invA5) from Paxillus involutus (Naked brimcap).